A 72-amino-acid polypeptide reads, in one-letter code: Gene 42 protein (72 aa).

The sequence is that of Gene 42 protein (42) from Mycobacterium phage L5 (Mycobacteriophage L5).